The sequence spans 139 residues: Ribonuclease P/MRP protein subunit POP5 (139 aa).

Belongs to the eukaryotic/archaeal RNase P protein component 2 family.

It is found in the nucleus. It catalyses the reaction Endonucleolytic cleavage of RNA, removing 5'-extranucleotides from tRNA precursor.. Functionally, component of ribonuclease P, a protein complex that generates mature tRNA molecules by cleaving their 5'-ends. Also a component of RNase MRP, which cleaves pre-rRNA sequences. This is Ribonuclease P/MRP protein subunit POP5 from Schizosaccharomyces pombe (strain 972 / ATCC 24843) (Fission yeast).